The primary structure comprises 460 residues: Serine--tRNA ligase (460 aa).

L-serine is bound at residue Thr255–Glu257. ATP is bound by residues Arg286–Glu288 and Val302. Position 309 (Glu309) interacts with L-serine. Glu373–Ser376 is a binding site for ATP. Thr409 serves as a coordination point for L-serine.

It belongs to the class-II aminoacyl-tRNA synthetase family. Type-1 seryl-tRNA synthetase subfamily. Homodimer. The tRNA molecule binds across the dimer.

It localises to the cytoplasm. The catalysed reaction is tRNA(Ser) + L-serine + ATP = L-seryl-tRNA(Ser) + AMP + diphosphate + H(+). It carries out the reaction tRNA(Sec) + L-serine + ATP = L-seryl-tRNA(Sec) + AMP + diphosphate + H(+). It functions in the pathway aminoacyl-tRNA biosynthesis; selenocysteinyl-tRNA(Sec) biosynthesis; L-seryl-tRNA(Sec) from L-serine and tRNA(Sec): step 1/1. Functionally, catalyzes the attachment of serine to tRNA(Ser). Is also able to aminoacylate tRNA(Sec) with serine, to form the misacylated tRNA L-seryl-tRNA(Sec), which will be further converted into selenocysteinyl-tRNA(Sec). The polypeptide is Serine--tRNA ligase (Aeropyrum pernix (strain ATCC 700893 / DSM 11879 / JCM 9820 / NBRC 100138 / K1)).